The sequence spans 49 residues: Lysozyme C (49 aa).

The C-type lysozyme domain maps to 1 to 49 (SKMKKCEFAKIAKEQHMDGYHGVSLADWVCLVNNESDFNTKAINRNKGI). Glu35 is an active-site residue.

The protein belongs to the glycosyl hydrolase 22 family. Monomer.

The protein localises to the secreted. The enzyme catalyses Hydrolysis of (1-&gt;4)-beta-linkages between N-acetylmuramic acid and N-acetyl-D-glucosamine residues in a peptidoglycan and between N-acetyl-D-glucosamine residues in chitodextrins.. In terms of biological role, lysozymes have primarily a bacteriolytic function; those in tissues and body fluids are associated with the monocyte-macrophage system and enhance the activity of immunoagents. The sequence is that of Lysozyme C (LYZ) from Pseudocheirus peregrinus (Common ring-tailed possum).